We begin with the raw amino-acid sequence, 667 residues long: Holliday junction recognition protein (667 aa).

The tract at residues 78 to 126 is disordered; sequence LNGQAPEGDSESSGADTSLEENWPSCSSAMREASGDPRQRQPAVPGNTL. A phosphoserine mark is found at Ser-169, Ser-185, and Ser-195. 2 disordered regions span residues 181-201 and 279-317; these read ISAK…GQGP and RRRP…EPGK. Residues 279–297 show a composition bias toward basic residues; it reads RRRPSRKQGLHKNRTHCPR. Phosphoserine is present on residues Ser-388, Ser-424, Ser-449, and Ser-462. The disordered stretch occupies residues 443-530; that stretch reads YRSGSKSPGS…NSEPTGKAVW (88 aa). Residues 466–482 show a composition bias toward basic and acidic residues; that stretch reads GREKTERPGEALEDLRG. Residues 496-515 are compositionally biased toward low complexity; the sequence is SCPSPEGSPSRSPSHSQLSS. Lys-554 participates in a covalent cross-link: Glycyl lysine isopeptide (Lys-Gly) (interchain with G-Cter in SUMO2). Residue Ser-567 is modified to Phosphoserine. The tract at residues 596 to 617 is disordered; the sequence is KRLNPDSPQQSSQKRSISPGCH. The segment covering 601 to 611 has biased composition (polar residues); the sequence is DSPQQSSQKRS. Ser-613 is modified (phosphoserine).

Interacts with CENPA (via CATD domain); the interaction is direct and specific for CENPA since it does not interact with H3.1- or H3.3-containing nucleosomes. Heterotrimer composed of HJURP, CENPA and histone H4, where HJURP interacts with the dimer formed by CENPA and histone H4 and prevents tetramerization of CENPA and H4. Identified in a centromere complex containing histones H2A, H2B and H4, and at least CENPA, CENPB, CENPC, CENPT, CENPN, HJURP, SUPT16H, SSRP1 and RSF1. Interacts with 14-3-3 family members in a phosphorylation-dependent manner. Interacts with MSH5 and NBN.

Its subcellular location is the nucleus. The protein localises to the nucleolus. It localises to the chromosome. The protein resides in the centromere. Functionally, centromeric protein that plays a central role in the incorporation and maintenance of histone H3-like variant CENPA at centromeres. Acts as a specific chaperone for CENPA and is required for the incorporation of newly synthesized CENPA molecules into nucleosomes at replicated centromeres. Prevents CENPA-H4 tetramerization and prevents premature DNA binding by the CENPA-H4 tetramer. Directly binds Holliday junctions. This is Holliday junction recognition protein (Hjurp) from Mus musculus (Mouse).